The following is a 299-amino-acid chain: MEHFDASLSTYFRALLGPRDTRVKGWFLLDNYIPTFVCSAIYLLIVWLGPKYMKNRQPFSCRGILVVYNLGLTLLSLYMFYELVTGVWEGKYNFFCQGTRSAGESDMKVIRVLWWYYFSKLIEFMDTFFFILRKNNHQITVLHVYHHATMLNIWWFVMNWVPCGHSYFGATLNSFIHVLMYSYYGLSSVPSMRPYLWWKKYITQGQLVQFVLTIIQTSCGVIWPCSFPLGWLYFQIGYMISLIALFTNFYIQTYNKKGASRRKEHLKGHQNGSMTAVNGHTNNFASLENSVTSRKQRKD.

At methionine 1 the chain carries N-acetylmethionine. The next 7 helical transmembrane spans lie at 26–46, 64–84, 112–132, 139–158, 168–187, 205–225, and 227–247; these read WFLLDNYIPTFVCSAIYLLIV, ILVVYNLGLTLLSLYMFYELV, VLWWYYFSKLIEFMDTFFFIL, ITVLHVYHHATMLNIWWFVM, FGATLNSFIHVLMYSYYGLS, GQLVQFVLTIIQTSCGVIWPC, and FPLGWLYFQIGYMISLIALFT.

It belongs to the ELO family. ELOVL5 subfamily. As to quaternary structure, interacts with TECR. In terms of tissue distribution, highly expressed in lung and brain.

The protein localises to the endoplasmic reticulum membrane. It localises to the cell projection. Its subcellular location is the dendrite. The enzyme catalyses a very-long-chain acyl-CoA + malonyl-CoA + H(+) = a very-long-chain 3-oxoacyl-CoA + CO2 + CoA. It catalyses the reaction (6Z,9Z,12Z,15Z)-octadecatetraenoyl-CoA + malonyl-CoA + H(+) = (8Z,11Z,14Z,17Z)-3-oxoicosatetraenoyl-CoA + CO2 + CoA. It carries out the reaction (6Z,9Z,12Z)-octadecatrienoyl-CoA + malonyl-CoA + H(+) = (8Z,11Z,14Z)-3-oxoeicosatrienoyl-CoA + CO2 + CoA. The catalysed reaction is (5Z,8Z,11Z,14Z,17Z)-eicosapentaenoyl-CoA + malonyl-CoA + H(+) = 3-oxo-(7Z,10Z,13Z,16Z,19Z)-docosapentaenoyl-CoA + CO2 + CoA. The enzyme catalyses (5Z,8Z,11Z,14Z)-eicosatetraenoyl-CoA + malonyl-CoA + H(+) = (7Z,10Z,13Z,16Z)-3-oxodocosatetraenoyl-CoA + CO2 + CoA. It catalyses the reaction (9Z,12Z,15Z)-octadecatrienoyl-CoA + malonyl-CoA + H(+) = (11Z,14Z,17Z)-3-oxoeicosatrienoyl-CoA + CO2 + CoA. It carries out the reaction (9Z)-hexadecenoyl-CoA + malonyl-CoA + H(+) = 3-oxo-(11Z)-octadecenoyl-CoA + CO2 + CoA. The catalysed reaction is (9Z)-octadecenoyl-CoA + malonyl-CoA + H(+) = 3-oxo-(11Z)-eicosenoyl-CoA + CO2 + CoA. The enzyme catalyses (11Z)-octadecenoyl-CoA + malonyl-CoA + H(+) = 3-oxo-(13Z)-eicosenoyl-CoA + CO2 + CoA. It catalyses the reaction (9Z,12Z)-octadecadienoyl-CoA + malonyl-CoA + H(+) = (11Z,14Z)-3-oxoicosa-11,14-dienoyl-CoA + CO2 + CoA. The protein operates within lipid metabolism; polyunsaturated fatty acid biosynthesis. Catalyzes the first and rate-limiting reaction of the four reactions that constitute the long-chain fatty acids elongation cycle. This endoplasmic reticulum-bound enzymatic process allows the addition of 2 carbons to the chain of long- and very long-chain fatty acids (VLCFAs) per cycle. Condensing enzyme that acts specifically toward polyunsaturated acyl-CoA with the higher activity toward C18:3(n-6) acyl-CoA. May participate in the production of monounsaturated and of polyunsaturated VLCFAs of different chain lengths that are involved in multiple biological processes as precursors of membrane lipids and lipid mediators. In conditions where the essential linoleic and alpha linoleic fatty acids are lacking it is also involved in the synthesis of Mead acid from oleic acid. In Rattus norvegicus (Rat), this protein is Very long chain fatty acid elongase 5.